The sequence spans 261 residues: Ribosomal RNA small subunit methyltransferase A (261 aa).

Residues Asn11, Leu13, Gly38, Glu59, Asp84, and Ser106 each contribute to the S-adenosyl-L-methionine site.

The protein belongs to the class I-like SAM-binding methyltransferase superfamily. rRNA adenine N(6)-methyltransferase family. RsmA subfamily.

Its subcellular location is the cytoplasm. The enzyme catalyses adenosine(1518)/adenosine(1519) in 16S rRNA + 4 S-adenosyl-L-methionine = N(6)-dimethyladenosine(1518)/N(6)-dimethyladenosine(1519) in 16S rRNA + 4 S-adenosyl-L-homocysteine + 4 H(+). In terms of biological role, specifically dimethylates two adjacent adenosines (A1518 and A1519) in the loop of a conserved hairpin near the 3'-end of 16S rRNA in the 30S particle. May play a critical role in biogenesis of 30S subunits. The polypeptide is Ribosomal RNA small subunit methyltransferase A (Wigglesworthia glossinidia brevipalpis).